Reading from the N-terminus, the 364-residue chain is Apyrase (364 aa).

Residues 1-35 form the signal peptide; it reads MRSSYRVGNPIRFQPTNVVGLLLLSLVLSFMLVQS.

This sequence belongs to the apyrase family. Requires Ca(2+) as cofactor. As to expression, salivary gland (at protein level).

The protein resides in the secreted. It carries out the reaction a ribonucleoside 5'-triphosphate + 2 H2O = a ribonucleoside 5'-phosphate + 2 phosphate + 2 H(+). Functionally, facilitates hematophagy by inhibiting ADP-dependent platelet aggregation in the host. Cleaves adenosine triphosphate (ATP) and adenosine diphosphate (ADP) to adenosine monophosphate (AMP) and inorganic phosphate in calcium-dependent manner. This Cimex lectularius (Bed bug) protein is Apyrase.